Consider the following 432-residue polypeptide: Mitochondrial distribution and morphology protein 12 (432 aa).

An SMP-LTD domain is found at 1 to 432 (MSIEVDWRAA…VFPSFWTFLI (432 aa)). Disordered stretches follow at residues 182–273 (WTDP…PRMR) and 354–377 (QQEARGQDDRPWSSADPTASPKRQ). A compositionally biased stretch (low complexity) spans 214 to 234 (TSNPTSRPSTSSTLPSHPSAS). Basic and acidic residues-rich tracts occupy residues 243 to 253 (TGKEHGSLAED) and 355 to 364 (QEARGQDDRP).

It belongs to the MDM12 family. Component of the ER-mitochondria encounter structure (ERMES) or MDM complex, composed of mmm1, mdm10, mdm12 and mdm34. A mmm1 homodimer associates with one molecule of mdm12 on each side in a pairwise head-to-tail manner, and the SMP-LTD domains of mmm1 and mdm12 generate a continuous hydrophobic tunnel for phospholipid trafficking.

It is found in the mitochondrion outer membrane. Its subcellular location is the endoplasmic reticulum membrane. Its function is as follows. Component of the ERMES/MDM complex, which serves as a molecular tether to connect the endoplasmic reticulum (ER) and mitochondria. Components of this complex are involved in the control of mitochondrial shape and protein biogenesis, and function in nonvesicular lipid trafficking between the ER and mitochondria. Mdm12 is required for the interaction of the ER-resident membrane protein MMM1 and the outer mitochondrial membrane-resident beta-barrel protein mdm10. The mdm12-mmm1 subcomplex functions in the major beta-barrel assembly pathway that is responsible for biogenesis of all mitochondrial outer membrane beta-barrel proteins, and acts in a late step after the SAM complex. The mdm10-mdm12-mmm1 subcomplex further acts in the TOM40-specific pathway after the action of the mdm12-mmm1 complex. Essential for establishing and maintaining the structure of mitochondria and maintenance of mtDNA nucleoids. The sequence is that of Mitochondrial distribution and morphology protein 12 from Aspergillus flavus (strain ATCC 200026 / FGSC A1120 / IAM 13836 / NRRL 3357 / JCM 12722 / SRRC 167).